A 67-amino-acid chain; its full sequence is Large ribosomal subunit protein uL29 (67 aa).

It belongs to the universal ribosomal protein uL29 family.

The protein is Large ribosomal subunit protein uL29 of Exiguobacterium sp. (strain ATCC BAA-1283 / AT1b).